Consider the following 135-residue polypeptide: Large ribosomal subunit protein uL16c (135 aa).

This sequence belongs to the universal ribosomal protein uL16 family. As to quaternary structure, part of the 50S ribosomal subunit.

The protein resides in the plastid. It localises to the chloroplast. This chain is Large ribosomal subunit protein uL16c, found in Piper cenocladum (Ant piper).